A 603-amino-acid chain; its full sequence is Cell division control protein 48 homolog B (603 aa).

ATP-binding positions include 63 to 70 (GPPGTGKT) and 327 to 334 (GPPGCSKT).

The protein belongs to the AAA ATPase family.

The protein localises to the nucleus. It is found in the cytoplasm. It localises to the cytoskeleton. The protein resides in the phragmoplast. Its function is as follows. Probably functions in cell division and growth processes. Interacts with certain SNAREs as part of specialized membrane fusion events where vesicles from the same organelle fuse (homotypic fusion). The protein is Cell division control protein 48 homolog B (CDC48B) of Arabidopsis thaliana (Mouse-ear cress).